Here is a 95-residue protein sequence, read N- to C-terminus: Protein translocase subunit SecE (95 aa).

Residues M1 to P35 are disordered. Residues K22–P35 are compositionally biased toward basic residues. A helical membrane pass occupies residues V67 to A87.

The protein belongs to the SecE/SEC61-gamma family. In terms of assembly, component of the Sec protein translocase complex. Heterotrimer consisting of SecY, SecE and SecG subunits. The heterotrimers can form oligomers, although 1 heterotrimer is thought to be able to translocate proteins. Interacts with the ribosome. Interacts with SecDF, and other proteins may be involved. Interacts with SecA.

It localises to the cell membrane. Its function is as follows. Essential subunit of the Sec protein translocation channel SecYEG. Clamps together the 2 halves of SecY. May contact the channel plug during translocation. The sequence is that of Protein translocase subunit SecE from Streptomyces griseus.